We begin with the raw amino-acid sequence, 365 residues long: Aminomethyltransferase (365 aa).

The protein belongs to the GcvT family. In terms of assembly, the glycine cleavage system is composed of four proteins: P, T, L and H.

It catalyses the reaction N(6)-[(R)-S(8)-aminomethyldihydrolipoyl]-L-lysyl-[protein] + (6S)-5,6,7,8-tetrahydrofolate = N(6)-[(R)-dihydrolipoyl]-L-lysyl-[protein] + (6R)-5,10-methylene-5,6,7,8-tetrahydrofolate + NH4(+). The glycine cleavage system catalyzes the degradation of glycine. This chain is Aminomethyltransferase, found in Chlorobium luteolum (strain DSM 273 / BCRC 81028 / 2530) (Pelodictyon luteolum).